The primary structure comprises 173 residues: Myeloid-derived growth factor (173 aa).

Residues M1 to A31 form the signal peptide.

It belongs to the MYDGF family. In terms of tissue distribution, expressed in eosinophils (at protein level). Expressed in bone marrow cells. Expressed in synovial tissue. Found in synovial fluid of patients with arthropaties.

Its subcellular location is the secreted. It localises to the endoplasmic reticulum-Golgi intermediate compartment. The protein localises to the endoplasmic reticulum. The protein resides in the golgi apparatus. Bone marrow-derived monocyte and paracrine-acting protein that promotes cardiac myocyte survival and adaptive angiogenesis for cardiac protection and/or repair after myocardial infarction (MI). Stimulates endothelial cell proliferation through a MAPK1/3-, STAT3- and CCND1-mediated signaling pathway. Inhibits cardiac myocyte apoptosis in a PI3K/AKT-dependent signaling pathway. Involved in endothelial cell proliferation and angiogenesis. This chain is Myeloid-derived growth factor, found in Homo sapiens (Human).